We begin with the raw amino-acid sequence, 179 residues long: Adenine phosphoribosyltransferase (179 aa).

The protein belongs to the purine/pyrimidine phosphoribosyltransferase family. In terms of assembly, homodimer.

It is found in the cytoplasm. It catalyses the reaction AMP + diphosphate = 5-phospho-alpha-D-ribose 1-diphosphate + adenine. It participates in purine metabolism; AMP biosynthesis via salvage pathway; AMP from adenine: step 1/1. Catalyzes a salvage reaction resulting in the formation of AMP, that is energically less costly than de novo synthesis. The polypeptide is Adenine phosphoribosyltransferase (Mycolicibacterium gilvum (strain PYR-GCK) (Mycobacterium gilvum (strain PYR-GCK))).